Reading from the N-terminus, the 944-residue chain is Serine/threonine-protein kinase PLK4 (944 aa).

The Protein kinase domain maps to 12 to 265; sequence FKVLNLLGKG…LSSVLDHAFM (254 aa). ATP is bound by residues 18–26 and lysine 41; that span reads LGKGSFACV. Catalysis depends on aspartate 136, which acts as the Proton acceptor. 3 disordered regions span residues 327 to 396, 432 to 463, and 530 to 561; these read KDKH…YSER, RSLE…RSND, and LGIK…QQAF. Positions 378–394 are enriched in polar residues; that stretch reads RSGTSQSQTYAKPSSYS. Basic and acidic residues predominate over residues 432-447; the sequence is RSLERHTSPPVKEKTP. A compositionally biased stretch (polar residues) spans 548-561; the sequence is FGEQSKSRVPQQAF. The region spanning 565–678 is the Cryptic POLO box 1 (CPB1) domain; the sequence is TLRSIISPLN…AKFIKLVRSK (114 aa). A Cryptic POLO box 2 (CPB2) domain is found at 679–791; that stretch reads TPKVTYYTRY…GRRPALAESP (113 aa). Residues 786–809 form a disordered region; the sequence is ALAESPKTQPTPSVDSARERKEEQ. Residues 862-940 enclose the POLO box domain; it reads QVLKSVFVEN…LSSILMLFAS (79 aa).

Belongs to the protein kinase superfamily. Ser/Thr protein kinase family. CDC5/Polo subfamily. In terms of assembly, homodimer. Ubiquitinated; leading to its degradation by the proteasome.

It is found in the cytoplasm. It localises to the cytoskeleton. The protein resides in the microtubule organizing center. Its subcellular location is the centrosome. The protein localises to the centriole. It carries out the reaction L-seryl-[protein] + ATP = O-phospho-L-seryl-[protein] + ADP + H(+). The enzyme catalyses L-threonyl-[protein] + ATP = O-phospho-L-threonyl-[protein] + ADP + H(+). Serine/threonine-protein kinase that plays a central role in centriole duplication. Able to trigger procentriole formation on the surface of the parental centriole cylinder, leading to the recruitment of centriole biogenesis proteins such as sass6, cpap, ccp110, cep135 and gamma-tubulin. When overexpressed, it is able to induce centrosome amplification through the simultaneous generation of multiple procentrioles adjoining each parental centriole during S phase. Its central role in centriole replication suggests a possible role in tumorigenesis, centrosome aberrations being frequently observed in tumors. Also involved in deuterosome-mediated centriole amplification in multiciliated that can generate more than 100 centrioles. The protein is Serine/threonine-protein kinase PLK4 of Xenopus laevis (African clawed frog).